Here is a 403-residue protein sequence, read N- to C-terminus: D-mannonate dehydratase CC0532 (403 aa).

The substrate site is built by Asn38 and His123. Residue Tyr160 is the Proton donor/acceptor of the active site. Asp211 serves as a coordination point for Mg(2+). The active-site Proton donor/acceptor is His213. Residues Glu237 and Glu263 each coordinate Mg(2+). The substrate site is built by Glu263, Arg284, His313, Asp317, and Glu340.

Belongs to the mandelate racemase/muconate lactonizing enzyme family. GalD subfamily. It depends on Mg(2+) as a cofactor.

It carries out the reaction D-mannonate = 2-dehydro-3-deoxy-D-gluconate + H2O. It functions in the pathway carbohydrate metabolism; pentose and glucuronate interconversion. Catalyzes the dehydration of D-mannonate. Has no detectable activity with a panel of 70 other acid sugars (in vitro). The polypeptide is D-mannonate dehydratase CC0532 (Caulobacter vibrioides (strain ATCC 19089 / CIP 103742 / CB 15) (Caulobacter crescentus)).